Reading from the N-terminus, the 488-residue chain is Sucrose 6(F)-phosphate phosphorylase (488 aa).

Residues Asp-49, His-87, 195–197, Glu-238, 295–296, 342–345, and Arg-399 contribute to the sucrose 6(F)-phosphate site; these read RLD, HD, and DVHQ. Asp-197 acts as the Nucleophile in catalysis. Residue Glu-238 is the Proton donor/acceptor of the active site.

Belongs to the glycosyl hydrolase 13 family. Sucrose phosphorylase subfamily. Monomer.

The enzyme catalyses sucrose 6(F)-phosphate + phosphate = beta-D-fructose 6-phosphate + alpha-D-glucose 1-phosphate. Its function is as follows. Catalyzes the reversible phosphorolysis of sucrose 6(F)-phosphate into alpha-D-glucose 1-phosphate (Glc1P) and D-fructose 6-phosphate. May be involved in a new pathway for the degradation of sucrose, which could become phosphorylated on its fructose moiety during uptake via a PTS system. To a lesser extent, can also reversibly act on sucrose in vitro. Is also able to catalyze transglycosylation reactions in vitro. The protein is Sucrose 6(F)-phosphate phosphorylase of Thermoanaerobacterium thermosaccharolyticum (strain ATCC 7956 / DSM 571 / NCIMB 9385 / NCA 3814 / NCTC 13789 / WDCM 00135 / 2032) (Clostridium thermosaccharolyticum).